Consider the following 275-residue polypeptide: Large ribosomal subunit protein uL2 (275 aa).

Residues 224-257 (AMNPIDHPHGGGEGRTAAGRDPVSPWGTPTKGFR) form a disordered region.

It belongs to the universal ribosomal protein uL2 family. As to quaternary structure, part of the 50S ribosomal subunit. Forms a bridge to the 30S subunit in the 70S ribosome.

One of the primary rRNA binding proteins. Required for association of the 30S and 50S subunits to form the 70S ribosome, for tRNA binding and peptide bond formation. It has been suggested to have peptidyltransferase activity; this is somewhat controversial. Makes several contacts with the 16S rRNA in the 70S ribosome. This Burkholderia mallei (strain NCTC 10247) protein is Large ribosomal subunit protein uL2.